The following is a 283-amino-acid chain: Phosphate import ATP-binding protein PstB 1 (283 aa).

Acidic residues predominate over residues Met1–Phe16. A disordered region spans residues Met1 to Arg35. The ABC transporter domain occupies Ile38–Ile278. Gly70–Ser77 contacts ATP.

It belongs to the ABC transporter superfamily. Phosphate importer (TC 3.A.1.7) family. The complex is composed of two ATP-binding proteins (PstB), two transmembrane proteins (PstC and PstA) and a solute-binding protein (PstS).

It is found in the cell membrane. It carries out the reaction phosphate(out) + ATP + H2O = ADP + 2 phosphate(in) + H(+). Its function is as follows. Part of the ABC transporter complex PstSACB involved in phosphate import. Responsible for energy coupling to the transport system. This Natronomonas pharaonis (strain ATCC 35678 / DSM 2160 / CIP 103997 / JCM 8858 / NBRC 14720 / NCIMB 2260 / Gabara) (Halobacterium pharaonis) protein is Phosphate import ATP-binding protein PstB 1.